Here is a 351-residue protein sequence, read N- to C-terminus: Phosphoribosylformylglycinamidine cyclo-ligase (351 aa).

The protein belongs to the AIR synthase family.

It is found in the cytoplasm. It catalyses the reaction 2-formamido-N(1)-(5-O-phospho-beta-D-ribosyl)acetamidine + ATP = 5-amino-1-(5-phospho-beta-D-ribosyl)imidazole + ADP + phosphate + H(+). It participates in purine metabolism; IMP biosynthesis via de novo pathway; 5-amino-1-(5-phospho-D-ribosyl)imidazole from N(2)-formyl-N(1)-(5-phospho-D-ribosyl)glycinamide: step 2/2. The polypeptide is Phosphoribosylformylglycinamidine cyclo-ligase (Burkholderia mallei (strain NCTC 10247)).